Consider the following 506-residue polypeptide: Probable Xaa-Pro aminopeptidase BDBG_08406 (506 aa).

Mn(2+)-binding residues include Asp-285, Asp-296, Glu-433, and Glu-471.

It belongs to the peptidase M24B family. Mn(2+) serves as cofactor.

It catalyses the reaction Release of any N-terminal amino acid, including proline, that is linked to proline, even from a dipeptide or tripeptide.. Catalyzes the removal of a penultimate prolyl residue from the N-termini of peptides. In Blastomyces gilchristii (strain SLH14081) (Blastomyces dermatitidis), this protein is Probable Xaa-Pro aminopeptidase BDBG_08406.